The following is a 207-amino-acid chain: Ribosomal RNA small subunit methyltransferase G (207 aa).

S-adenosyl-L-methionine-binding positions include Gly71, Phe76, 122–123, and Arg135; that span reads AE.

It belongs to the methyltransferase superfamily. RNA methyltransferase RsmG family.

Its subcellular location is the cytoplasm. Its function is as follows. Specifically methylates the N7 position of a guanine in 16S rRNA. The chain is Ribosomal RNA small subunit methyltransferase G from Cytophaga hutchinsonii (strain ATCC 33406 / DSM 1761 / CIP 103989 / NBRC 15051 / NCIMB 9469 / D465).